The sequence spans 180 residues: Translation initiation factor IF-3 (180 aa).

It belongs to the IF-3 family. As to quaternary structure, monomer.

The protein localises to the cytoplasm. Its function is as follows. IF-3 binds to the 30S ribosomal subunit and shifts the equilibrium between 70S ribosomes and their 50S and 30S subunits in favor of the free subunits, thus enhancing the availability of 30S subunits on which protein synthesis initiation begins. This chain is Translation initiation factor IF-3, found in Shewanella oneidensis (strain ATCC 700550 / JCM 31522 / CIP 106686 / LMG 19005 / NCIMB 14063 / MR-1).